A 405-amino-acid polypeptide reads, in one-letter code: Protein NCA1 (405 aa).

The disordered stretch occupies residues Met-1 to Ser-85. Basic and acidic residues-rich tracts occupy residues Ala-13 to Gly-24 and Ala-37 to Gly-48. A compositionally biased stretch (polar residues) spans Gly-76 to Ser-85. Residues Cys-108–Cys-142 form an RING-type zinc finger. TPR repeat units follow at residues Gly-247–Leu-280 and Ser-292–Ala-325.

In terms of assembly, interacts with the catalases CAT1, CAT2 and CAT3. This interaction is not induced by alkaline stress or H(2)O(2) and NaCl treatments. As to expression, expressed in roots, stems, leaves, flowers and siliques.

It is found in the cytoplasm. The protein localises to the nucleus. Functionally, has holdase chaperone activity that may fold catalase to a functional structure. Not required for the peroxisome import of catalases. Required for the activity of catalases and acts mainly at the post-transcriptional level. This chain is Protein NCA1, found in Arabidopsis thaliana (Mouse-ear cress).